Reading from the N-terminus, the 667-residue chain is Transketolase 2 (667 aa).

Substrate is bound at residue histidine 25. Residues histidine 65 and 113–115 (GPL) each bind thiamine diphosphate. Aspartate 154 provides a ligand contact to Mg(2+). Positions 155 and 184 each coordinate thiamine diphosphate. Positions 184 and 186 each coordinate Mg(2+). Residue histidine 260 coordinates substrate. A thiamine diphosphate-binding site is contributed by histidine 260. N6-acetyllysine is present on lysine 342. Substrate is bound by residues arginine 357 and serine 384. Glutamate 410 functions as the Proton donor in the catalytic mechanism. Residue phenylalanine 436 coordinates thiamine diphosphate. Substrate is bound by residues histidine 460, aspartate 468, and arginine 519.

It belongs to the transketolase family. In terms of assembly, homodimer. The cofactor is Mg(2+). Ca(2+) serves as cofactor. Mn(2+) is required as a cofactor. Requires Co(2+) as cofactor. It depends on thiamine diphosphate as a cofactor.

It catalyses the reaction D-sedoheptulose 7-phosphate + D-glyceraldehyde 3-phosphate = aldehydo-D-ribose 5-phosphate + D-xylulose 5-phosphate. In terms of biological role, catalyzes the reversible transfer of a two-carbon ketol group from sedoheptulose-7-phosphate to glyceraldehyde-3-phosphate, producing xylulose-5-phosphate and ribose-5-phosphate. Catalyzes the transfer of a two-carbon ketol group from a ketose donor to an aldose acceptor, via a covalent intermediate with the cofactor thiamine pyrophosphate. This Escherichia coli (strain K12) protein is Transketolase 2.